The following is a 278-amino-acid chain: UPF0276 protein Shew_2240 (278 aa).

This sequence belongs to the UPF0276 family.

This Shewanella loihica (strain ATCC BAA-1088 / PV-4) protein is UPF0276 protein Shew_2240.